A 421-amino-acid chain; its full sequence is Ribosomal RNA large subunit methyltransferase G (421 aa).

The interval 389-421 (EPELEQESDLNSKLDANTEVPHPQSALYGKPKA) is disordered.

This sequence belongs to the methyltransferase superfamily. RlmG family.

It localises to the cytoplasm. It catalyses the reaction guanosine(1835) in 23S rRNA + S-adenosyl-L-methionine = N(2)-methylguanosine(1835) in 23S rRNA + S-adenosyl-L-homocysteine + H(+). Specifically methylates the guanine in position 1835 (m2G1835) of 23S rRNA. The chain is Ribosomal RNA large subunit methyltransferase G from Shewanella halifaxensis (strain HAW-EB4).